Reading from the N-terminus, the 321-residue chain is Lipoyl synthase (321 aa).

[4Fe-4S] cluster-binding residues include Cys-68, Cys-73, Cys-79, Cys-94, Cys-98, Cys-101, and Ser-308. Positions 80 to 297 (FNHGTATFMI…KEIALELGFT (218 aa)) constitute a Radical SAM core domain.

Belongs to the radical SAM superfamily. Lipoyl synthase family. [4Fe-4S] cluster is required as a cofactor.

It is found in the cytoplasm. It catalyses the reaction [[Fe-S] cluster scaffold protein carrying a second [4Fe-4S](2+) cluster] + N(6)-octanoyl-L-lysyl-[protein] + 2 oxidized [2Fe-2S]-[ferredoxin] + 2 S-adenosyl-L-methionine + 4 H(+) = [[Fe-S] cluster scaffold protein] + N(6)-[(R)-dihydrolipoyl]-L-lysyl-[protein] + 4 Fe(3+) + 2 hydrogen sulfide + 2 5'-deoxyadenosine + 2 L-methionine + 2 reduced [2Fe-2S]-[ferredoxin]. The protein operates within protein modification; protein lipoylation via endogenous pathway; protein N(6)-(lipoyl)lysine from octanoyl-[acyl-carrier-protein]: step 2/2. Functionally, catalyzes the radical-mediated insertion of two sulfur atoms into the C-6 and C-8 positions of the octanoyl moiety bound to the lipoyl domains of lipoate-dependent enzymes, thereby converting the octanoylated domains into lipoylated derivatives. This is Lipoyl synthase from Vibrio vulnificus (strain CMCP6).